The following is a 519-amino-acid chain: Mannuronan C5-epimerase (519 aa).

A signal peptide spans 1–25 (MNLHPHLRHSLLASALLLASGLATA). PbH1 repeat units lie at residues 219–246 (GTET…SISQ), 281–303 (TQDF…DPHD), 305–328 (SHRL…IVSR), 330–352 (VNDS…VIDR), 354–376 (SVNN…TLYE), and 377–399 (SGDN…RVRN). H302 (proton acceptor) is an active-site residue.

The protein belongs to the D-mannuronate C5-epimerase family.

The protein resides in the periplasm. The catalysed reaction is [(1-&gt;4)-beta-D-mannuronosyl](n) = [alginate](n). It functions in the pathway glycan biosynthesis; alginate biosynthesis. Its function is as follows. Catalyzes the epimerization of beta-D-mannuronate to alpha-L-guluronate during the synthesis of the linear polysaccharide alginate. In addition, is part of a periplasmic protein complex that protects alginate from degradation by AlgL by channeling the newly formed alginate polymer through a scaffold that transfers the alginate polymer through the periplasmic space to the outer membrane secretin AlgE. The chain is Mannuronan C5-epimerase (algG) from Pseudomonas putida (strain ATCC 47054 / DSM 6125 / CFBP 8728 / NCIMB 11950 / KT2440).